The sequence spans 246 residues: U2 small nuclear ribonucleoprotein A' (246 aa).

LRR repeat units lie at residues 19 to 40 (RDRE…GVTR), 42 to 63 (QNDA…PLLQ), 64 to 85 (QLKT…IGHS), and 88 to 109 (ALHS…VHLS). Positions 122 to 160 (TPASREAQYREFVIWKLPQVRVLDYQRIKDKERARAKDL) constitute an LRRCT domain.

This sequence belongs to the U2 small nuclear ribonucleoprotein A family. As to quaternary structure, associated with the spliceosome.

It is found in the nucleus. In terms of biological role, involved in pre-mRNA splicing. The polypeptide is U2 small nuclear ribonucleoprotein A' (LEA1) (Mycosarcoma maydis (Corn smut fungus)).